The following is a 577-amino-acid chain: NKAP family protein UM04995 (577 aa).

Residues Met1 to Gly479 form a disordered region. The segment covering Lys20–Ser31 has biased composition (basic and acidic residues). Positions Ser36–Ala49 are enriched in polar residues. Residues Ser50–Leu60 are compositionally biased toward basic and acidic residues. Low complexity predominate over residues Ser70–Ser89. Composition is skewed to basic and acidic residues over residues Pro127–Arg163, Ser170–Pro193, and Asp265–His297. 2 stretches are compositionally biased toward basic residues: residues Ser298 to Ser316 and Ser325 to His336. The span at Asp340–Asp350 shows a compositional bias: acidic residues. A compositionally biased stretch (basic and acidic residues) spans Lys363–Ser385. The span at Ser386–Ser395 shows a compositional bias: basic residues. Composition is skewed to basic and acidic residues over residues Asp396–Lys408 and Ser417–Ser439. Positions Arg529–Gln570 form a coiled coil.

The protein belongs to the NKAP family.

In Mycosarcoma maydis (Corn smut fungus), this protein is NKAP family protein UM04995.